Consider the following 219-residue polypeptide: Thiopurine S-methyltransferase (219 aa).

Residues Trp-10, Leu-45, Glu-66, and Arg-123 each coordinate S-adenosyl-L-methionine.

The protein belongs to the class I-like SAM-binding methyltransferase superfamily. TPMT family.

The protein resides in the cytoplasm. The enzyme catalyses S-adenosyl-L-methionine + a thiopurine = S-adenosyl-L-homocysteine + a thiopurine S-methylether.. The chain is Thiopurine S-methyltransferase from Bordetella pertussis (strain Tohama I / ATCC BAA-589 / NCTC 13251).